The primary structure comprises 285 residues: Seipin (285 aa).

Topologically, residues 1 to 16 (MKINVSRPLQFLQWSS) are cytoplasmic. Residues 17–37 (YIVVAFLIQLLIILPLSILIY) form a helical membrane-spanning segment. The Lumenal portion of the chain corresponds to 38–244 (HDFYLRLLPA…GLRNLMLRKR (207 aa)). Residues 245-265 (FLSYIIGISIFHCIICVLFFI) traverse the membrane as a helical segment. Residues 266 to 285 (TGCTAFIFVRKGQEKSKKHS) lie on the Cytoplasmic side of the membrane.

This sequence belongs to the seipin family.

The protein resides in the endoplasmic reticulum membrane. Involved in lipid metabolism and lipid droplet (LD) morphology, number, and size. Facilitates initiation of LD formation, and ensures that vectorial budding of LDs from the ER is directed towards the cytoplasm. The protein is Seipin of Saccharomyces cerevisiae (strain ATCC 204508 / S288c) (Baker's yeast).